Consider the following 151-residue polypeptide: Transcriptional repressor NrdR (151 aa).

A zinc finger lies at cysteine 3–cysteine 34. Residues isoleucine 49–threonine 139 enclose the ATP-cone domain.

Belongs to the NrdR family. It depends on Zn(2+) as a cofactor.

In terms of biological role, negatively regulates transcription of bacterial ribonucleotide reductase nrd genes and operons by binding to NrdR-boxes. In Clostridium botulinum (strain 657 / Type Ba4), this protein is Transcriptional repressor NrdR.